Reading from the N-terminus, the 648-residue chain is Rho GTPase-activating protein 25 (648 aa).

One can recognise a PH domain in the interval 46–151; sequence RPIKVGWLKK…WVKFLRRVAG (106 aa). A Rho-GAP domain is found at 160-354; sequence QRLDETVAYE…MMIRDHEVLF (195 aa). Positions 356–559 are disordered; the sequence is KSKDAPISPP…DLDSLQRTVQ (204 aa). Ser363, Ser396, and Ser403 each carry phosphoserine. A compositionally biased stretch (polar residues) spans 393–410; the sequence is RTDSFSNTASSPDATSPT. The residue at position 407 (Thr407) is a Phosphothreonine. The span at 417–431 shows a compositional bias: basic and acidic residues; sequence QHQEDSGKAPRENPG. 2 stretches are compositionally biased toward polar residues: residues 453–462 and 497–515; these read SAFQGTTSSK and DQRT…SQGN. Phosphoserine is present on Ser537. The stretch at 540–641 forms a coiled coil; that stretch reads EAGSKNSGED…VKEFVKSMEK (102 aa).

Its function is as follows. GTPase activator for the Rho-type GTPases by converting them to an inactive GDP-bound state. The chain is Rho GTPase-activating protein 25 (Arhgap25) from Mus musculus (Mouse).